The primary structure comprises 449 residues: ATP-dependent protease ATPase subunit HslU (449 aa).

ATP-binding positions include I18, 60 to 65 (GVGKTE), D261, E327, and R399.

This sequence belongs to the ClpX chaperone family. HslU subfamily. In terms of assembly, a double ring-shaped homohexamer of HslV is capped on each side by a ring-shaped HslU homohexamer. The assembly of the HslU/HslV complex is dependent on binding of ATP.

It is found in the cytoplasm. Functionally, ATPase subunit of a proteasome-like degradation complex; this subunit has chaperone activity. The binding of ATP and its subsequent hydrolysis by HslU are essential for unfolding of protein substrates subsequently hydrolyzed by HslV. HslU recognizes the N-terminal part of its protein substrates and unfolds these before they are guided to HslV for hydrolysis. This Oleidesulfovibrio alaskensis (strain ATCC BAA-1058 / DSM 17464 / G20) (Desulfovibrio alaskensis) protein is ATP-dependent protease ATPase subunit HslU.